Consider the following 480-residue polypeptide: UDP-glucose 6-dehydrogenase 3 (480 aa).

Residues 8–13 (GAGYVG), Asp33, Arg38, 86–90 (VNTPT), 127–128 (ST), and Glu161 contribute to the NAD(+) site. Residues 157 to 161 (EFLAE), 216 to 223 (KLAANAFL), and 256 to 269 (RIGP…VGFG) each bind substrate. Cys272 serves as the catalytic Nucleophile. Residue 272–275 (CFQK) coordinates NAD(+). 334-335 (FK) provides a ligand contact to substrate. Residue Arg342 participates in NAD(+) binding. Ser393 bears the Phosphoserine mark. Substrate is bound at residue Arg447.

Belongs to the UDP-glucose/GDP-mannose dehydrogenase family.

The catalysed reaction is UDP-alpha-D-glucose + 2 NAD(+) + H2O = UDP-alpha-D-glucuronate + 2 NADH + 3 H(+). The protein operates within nucleotide-sugar biosynthesis; UDP-alpha-D-glucuronate biosynthesis; UDP-alpha-D-glucuronate from UDP-alpha-D-glucose: step 1/1. Involved in the biosynthesis of UDP-glucuronic acid (UDP-GlcA), providing nucleotide sugars for cell-wall polymers. The polypeptide is UDP-glucose 6-dehydrogenase 3 (UGD3) (Oryza sativa subsp. japonica (Rice)).